Reading from the N-terminus, the 306-residue chain is Putative NylC-analogous protein (306 aa).

Belongs to the peptidase S58 family.

This chain is Putative NylC-analogous protein, found in Agromyces sp. (strain KY5R).